Reading from the N-terminus, the 384-residue chain is Dual-specificity RNA methyltransferase RlmN (384 aa).

E93 serves as the catalytic Proton acceptor. One can recognise a Radical SAM core domain in the interval 99–339; it reads EETRGTLCVS…TTIRKTRGDD (241 aa). A disulfide bridge links C106 with C344. The [4Fe-4S] cluster site is built by C113, C117, and C120. Residues 170–171, S202, 224–226, and N301 each bind S-adenosyl-L-methionine; these read GE and SLH. The active-site S-methylcysteine intermediate is C344.

This sequence belongs to the radical SAM superfamily. RlmN family. Requires [4Fe-4S] cluster as cofactor.

The protein localises to the cytoplasm. The catalysed reaction is adenosine(2503) in 23S rRNA + 2 reduced [2Fe-2S]-[ferredoxin] + 2 S-adenosyl-L-methionine = 2-methyladenosine(2503) in 23S rRNA + 5'-deoxyadenosine + L-methionine + 2 oxidized [2Fe-2S]-[ferredoxin] + S-adenosyl-L-homocysteine. The enzyme catalyses adenosine(37) in tRNA + 2 reduced [2Fe-2S]-[ferredoxin] + 2 S-adenosyl-L-methionine = 2-methyladenosine(37) in tRNA + 5'-deoxyadenosine + L-methionine + 2 oxidized [2Fe-2S]-[ferredoxin] + S-adenosyl-L-homocysteine. Specifically methylates position 2 of adenine 2503 in 23S rRNA and position 2 of adenine 37 in tRNAs. m2A2503 modification seems to play a crucial role in the proofreading step occurring at the peptidyl transferase center and thus would serve to optimize ribosomal fidelity. The polypeptide is Dual-specificity RNA methyltransferase RlmN (Cupriavidus necator (strain ATCC 17699 / DSM 428 / KCTC 22496 / NCIMB 10442 / H16 / Stanier 337) (Ralstonia eutropha)).